A 105-amino-acid polypeptide reads, in one-letter code: Small ribosomal subunit protein uS10 (105 aa).

This sequence belongs to the universal ribosomal protein uS10 family. Part of the 30S ribosomal subunit.

In terms of biological role, involved in the binding of tRNA to the ribosomes. This Anaplasma marginale (strain Florida) protein is Small ribosomal subunit protein uS10.